Here is a 795-residue protein sequence, read N- to C-terminus: Multiple C2 domain and transmembrane region protein 12 (795 aa).

C2 domains lie at R24–Y142, V180–A298, and Y341–Y463. Ca(2+)-binding residues include N57, D109, and N113. Helical transmembrane passes span C590–I610, W612–L632, F730–W750, and L752–F772.

It belongs to the MCTP family. The cofactor is Ca(2+). In terms of tissue distribution, expressed in root vascular tissues and meristems. Observed in flowers.

The protein resides in the endoplasmic reticulum membrane. May function as a signaling molecule by regulating the trafficking of other regulators. This chain is Multiple C2 domain and transmembrane region protein 12, found in Arabidopsis thaliana (Mouse-ear cress).